The sequence spans 397 residues: Xyloglucan O-acetyltransferase 3 (397 aa).

Topologically, residues 1–3 (MNR) are cytoplasmic. A helical; Signal-anchor for type II membrane protein transmembrane segment spans residues 4-24 (FFYTVGLIFLFSFFILYSPKT). Residues 25-397 (SDLSNNVDLH…RHAFTDFTWS (373 aa)) lie on the Lumenal side of the membrane. Intrachain disulfides connect Cys48/Cys98, Cys69/Cys134, Cys78/Cys370, and Cys293/Cys366. Asn66 is a glycosylation site (N-linked (GlcNAc...) asparagine). The GDS motif motif lies at 121–123 (GDS). The Nucleophile role is filled by Ser123. Residues Asn162, Asn182, and Asn294 are each glycosylated (N-linked (GlcNAc...) asparagine). Asp365 (proton donor) is an active-site residue. Residues 365–368 (DCVH) carry the DXXH motif motif. His368 (proton acceptor) is an active-site residue.

This sequence belongs to the PC-esterase family. TBL subfamily.

The protein resides in the golgi apparatus membrane. Its function is as follows. Xyloglucan acetyltransferase that catalyzes the acetylation of fucosylated Gal residues on xyloglucan side chains. Predominantly catalyze 6-O-monoacetylation of Gal residues in the Fuc-Gal-Xyl trisaccharide side chains of xyloglucan oligomers. The polypeptide is Xyloglucan O-acetyltransferase 3 (Populus trichocarpa (Western balsam poplar)).